Reading from the N-terminus, the 502-residue chain is NAD(P)H-quinone oxidoreductase subunit 2, chloroplastic (502 aa).

Transmembrane regions (helical) follow at residues 15 to 35 (VLPEAIIICSSLFILIIDLIF), 42 to 62 (VLPYMAILGLILSMLSLLFQW), 79 to 99 (LSIAFRLLIALSSMLCVLLSI), 108 to 128 (TLSEFLVIFLTATLGAMLLCG), 132 to 152 (ILMIFLSLETLGLCSYILTGY), 167 to 187 (LLIGAASSSILLYGFSLLYGL), 210 to 230 (LASLVALALIIVGISFKIAAA), 253 to 275 (VSSKAAGLMLATRIMTILFPYII), 278 to 298 (WHNIFQILAILSMAIGNIIAI), 307 to 327 (LGYSSIAQAGFLLVGLLAGNI), 334 to 354 (LVYMLIYLFMNLGAFACVILF), 375 to 395 (ILALCLSICLLSLGGIPPFGG), 413 to 433 (LLVFVGLLTSVISIFYYIKII), and 468 to 488 (ILICVIGTTISGIFVNPIISI).

This sequence belongs to the complex I subunit 2 family. NDH is composed of at least 16 different subunits, 5 of which are encoded in the nucleus.

It is found in the plastid. Its subcellular location is the chloroplast thylakoid membrane. The enzyme catalyses a plastoquinone + NADH + (n+1) H(+)(in) = a plastoquinol + NAD(+) + n H(+)(out). The catalysed reaction is a plastoquinone + NADPH + (n+1) H(+)(in) = a plastoquinol + NADP(+) + n H(+)(out). In terms of biological role, NDH shuttles electrons from NAD(P)H:plastoquinone, via FMN and iron-sulfur (Fe-S) centers, to quinones in the photosynthetic chain and possibly in a chloroplast respiratory chain. The immediate electron acceptor for the enzyme in this species is believed to be plastoquinone. Couples the redox reaction to proton translocation, and thus conserves the redox energy in a proton gradient. This chain is NAD(P)H-quinone oxidoreductase subunit 2, chloroplastic, found in Mesostigma viride (Green alga).